The primary structure comprises 480 residues: Acetyl-coenzyme A carboxylase carboxyl transferase subunit beta, chloroplastic (480 aa).

The tract at residues 25–48 is disordered; the sequence is TSSLGPIENASESKDPNINDTDKN. Residues 35–47 are compositionally biased toward basic and acidic residues; sequence SESKDPNINDTDK. The CoA carboxyltransferase N-terminal domain maps to 216-480; it reads LWVQCENCYG…LHTFFPLNQN (265 aa). Zn(2+)-binding residues include cysteine 220, cysteine 223, cysteine 239, and cysteine 242. The C4-type zinc-finger motif lies at 220-242; it reads CENCYGLNYKKFFKSKMNLCEQC.

Belongs to the AccD/PCCB family. As to quaternary structure, acetyl-CoA carboxylase is a heterohexamer composed of biotin carboxyl carrier protein, biotin carboxylase and 2 subunits each of ACCase subunit alpha and ACCase plastid-coded subunit beta (accD). Requires Zn(2+) as cofactor.

The protein resides in the plastid. The protein localises to the chloroplast stroma. The catalysed reaction is N(6)-carboxybiotinyl-L-lysyl-[protein] + acetyl-CoA = N(6)-biotinyl-L-lysyl-[protein] + malonyl-CoA. It participates in lipid metabolism; malonyl-CoA biosynthesis; malonyl-CoA from acetyl-CoA: step 1/1. Functionally, component of the acetyl coenzyme A carboxylase (ACC) complex. Biotin carboxylase (BC) catalyzes the carboxylation of biotin on its carrier protein (BCCP) and then the CO(2) group is transferred by the transcarboxylase to acetyl-CoA to form malonyl-CoA. This Helianthus annuus (Common sunflower) protein is Acetyl-coenzyme A carboxylase carboxyl transferase subunit beta, chloroplastic.